The following is a 291-amino-acid chain: MNSFAVFGNPIRHSKSAEIYALFAHEIGISKEYNLKLAVQDNFNYLLHNFFKLGGLGANITSPFKENAYFLCNQLTERAEKARSVNTIKKLKNGTLLGDNTDGIGFISDLKRLNWLDNNNQIISNDAPIPMVTNILLIGAGGAAKGIVPILLTTITTCHINIVNRTFSRAQELTSYYQEIGYKNISCLPLYKLRYDTNKYSLIINATTSNIHNTIPKIPYFLITPDTKCYDLFYTKQDTLFITWCKKNGANYCADGLGMLVGQAAHSFLLWHNTFPTINPVIDHLRSAFYM.

Shikimate is bound by residues 14–16 (SKS) and Thr-61. Lys-65 functions as the Proton acceptor in the catalytic mechanism. Glu-77 is an NADP(+) binding site. Shikimate is bound by residues Asn-86 and Asp-102. NADP(+)-binding positions include 139-143 (GAGGA), 164-169 (NRTFSR), and Leu-232. A shikimate-binding site is contributed by Tyr-234. Gly-256 provides a ligand contact to NADP(+).

This sequence belongs to the shikimate dehydrogenase family. Homodimer.

The enzyme catalyses shikimate + NADP(+) = 3-dehydroshikimate + NADPH + H(+). It participates in metabolic intermediate biosynthesis; chorismate biosynthesis; chorismate from D-erythrose 4-phosphate and phosphoenolpyruvate: step 4/7. Its function is as follows. Involved in the biosynthesis of the chorismate, which leads to the biosynthesis of aromatic amino acids. Catalyzes the reversible NADPH linked reduction of 3-dehydroshikimate (DHSA) to yield shikimate (SA). The sequence is that of Shikimate dehydrogenase (NADP(+)) from Blochmanniella pennsylvanica (strain BPEN).